The chain runs to 247 residues: Uridylate kinase (247 aa).

Position 18–21 (18–21 (KLSG)) interacts with ATP. Residue Gly-60 coordinates UMP. Gly-61 and Arg-65 together coordinate ATP. UMP-binding positions include Asp-80 and 141-148 (TGNPFFTT). ATP contacts are provided by Thr-168, Tyr-174, and Asp-177.

It belongs to the UMP kinase family. In terms of assembly, homohexamer.

The protein resides in the cytoplasm. It catalyses the reaction UMP + ATP = UDP + ADP. The protein operates within pyrimidine metabolism; CTP biosynthesis via de novo pathway; UDP from UMP (UMPK route): step 1/1. Inhibited by UTP. In terms of biological role, catalyzes the reversible phosphorylation of UMP to UDP. This chain is Uridylate kinase, found in Pseudomonas fluorescens (strain ATCC BAA-477 / NRRL B-23932 / Pf-5).